Reading from the N-terminus, the 406-residue chain is LIM/homeobox protein Lhx1 (406 aa).

LIM zinc-binding domains are found at residues 4 to 54 (CAGC…CKND) and 63 to 117 (CAGC…CKED). Residues 125–136 (AKENSLHSATTG) show a composition bias toward polar residues. Disordered regions lie at residues 125–187 (AKEN…RTTI) and 296–372 (FPQG…SAEV). Over residues 137-148 (SDPSLSPDSQDP) the composition is skewed to low complexity. Positions 151–167 (DDAKDSESANVSDKETG) are enriched in basic and acidic residues. A DNA-binding region (homeobox) is located at residues 180-239 (RRGPRTTIKAKQLETLKAAFAATPKPTRHIREQLAQETGLNMRVIQVWFQNRRSKERRMK).

The protein resides in the nucleus. In terms of biological role, transcriptional factor that defines subclasses of motoneurons that segregate into columns in the spinal cord and select distinct axon pathways. Acts in conjunction with ISL-2. The polypeptide is LIM/homeobox protein Lhx1 (LHX1) (Gallus gallus (Chicken)).